A 217-amino-acid polypeptide reads, in one-letter code: Somatotropin (217 aa).

An N-terminal signal peptide occupies residues 1 to 26 (MMAAGPRTSLLLAFALLCLPWTQVVG). Position 46 (His46) interacts with Zn(2+). Cys79 and Cys190 form a disulfide bridge. Ser132 bears the Phosphoserine mark. Glu199 lines the Zn(2+) pocket. A disulfide bridge links Cys207 with Cys215.

The protein belongs to the somatotropin/prolactin family.

The protein resides in the secreted. Plays an important role in growth control. Its major role in stimulating body growth is to stimulate the liver and other tissues to secrete IGF1. It stimulates both the differentiation and proliferation of myoblasts. It also stimulates amino acid uptake and protein synthesis in muscle and other tissues. The sequence is that of Somatotropin (GH1) from Bos taurus (Bovine).